The following is a 1941-amino-acid chain: Myosin-2 (1941 aa).

The region spanning Asp-33–Pro-82 is the Myosin N-terminal SH3-like domain. 2 positions are modified to phosphothreonine: Thr-64 and Thr-69. In terms of domain architecture, Myosin motor spans Asp-86–Asp-784. Lys-130 is subject to N6,N6,N6-trimethyllysine. Gly-179–Thr-186 lines the ATP pocket. Phosphotyrosine is present on Tyr-389. Phosphoserine is present on Ser-392. Residue Thr-419 is modified to Phosphothreonine. Ser-625 carries the post-translational modification Phosphoserine. The segment at Leu-661–Glu-683 is actin-binding. His-759 is subject to Pros-methylhistidine. Residues Lys-763–Gly-777 form an actin-binding region. One can recognise an IQ domain in the interval Leu-787–Ala-816. A coiled-coil region spans residues Leu-845 to Glu-1941. Phosphoserine is present on residues Ser-1094 and Ser-1098. Disordered regions lie at residues Ile-1128–Leu-1149 and Arg-1155–Glu-1174. Residues Ala-1130–Leu-1149 show a composition bias toward basic and acidic residues. Residues Ser-1164 and Ser-1239 each carry the phosphoserine modification. Thr-1243 carries the post-translational modification Phosphothreonine. Ser-1245 is subject to Phosphoserine. Thr-1257 carries the phosphothreonine modification. At Ser-1263 the chain carries Phosphoserine. Phosphothreonine is present on Thr-1288. A phosphoserine mark is found at Ser-1290, Ser-1294, Ser-1305, and Ser-1308. Thr-1469 bears the Phosphothreonine mark. Ser-1476 carries the post-translational modification Phosphoserine. Tyr-1494 bears the Phosphotyrosine mark. The residue at position 1497 (Ser-1497) is a Phosphoserine. Position 1503 is a phosphothreonine (Thr-1503). Residue Ser-1516 is modified to Phosphoserine. Position 1519 is a phosphothreonine (Thr-1519). Ser-1556, Ser-1576, Ser-1602, Ser-1605, Ser-1716, and Ser-1728 each carry phosphoserine. Residues Thr-1732 and Thr-1738 each carry the phosphothreonine modification. Ser-1741 is modified (phosphoserine).

The protein belongs to the TRAFAC class myosin-kinesin ATPase superfamily. Myosin family. Muscle myosin is a hexameric protein that consists of 2 heavy chain subunits (MHC), 2 alkali light chain subunits (MLC) and 2 regulatory light chain subunits (MLC-2). Interacts with GCSAM.

Its subcellular location is the cytoplasm. The protein localises to the myofibril. Myosins are actin-based motor molecules with ATPase activity essential for muscle contraction. This chain is Myosin-2, found in Homo sapiens (Human).